Here is a 553-residue protein sequence, read N- to C-terminus: Sensitive to high expression protein 9 homolog, mitochondrial (553 aa).

Residues 61 to 174 (FFSTQPPKDT…TAQPELPSRT (114 aa)) are disordered. The segment covering 62 to 84 (FSTQPPKDTPENMNNKETGSSNV) has biased composition (polar residues). Basic and acidic residues predominate over residues 103–116 (AKEDTTDATNKSET). Positions 133 to 160 (SDVSSASTSDSANSSETTTTTSETTPEN) are enriched in low complexity. 2 coiled-coil regions span residues 210-241 (SAIE…HNYK) and 277-309 (RLDH…DLNA). Residues 331–351 (WGTWGLMGVNVLLFLVLQFVA) form a helical membrane-spanning segment. Topologically, residues 352–523 (EPWRRKRLMK…RIDLKMRDVS (172 aa)) are mitochondrial intermembrane. Disordered stretches follow at residues 408-428 (ALAS…RTEG) and 443-497 (AEEA…QTLS). Low complexity-rich tracts occupy residues 443-473 (AEEA…QTPE) and 484-495 (TWKQTAQKWQQT). The helical transmembrane segment at 524–544 (LLALESAATGAAVVASVAFFV) threads the bilayer. Residues 545–553 (LRSSGSGKA) are Mitochondrial matrix-facing.

This sequence belongs to the SHE9 family. Homooligomer.

The protein localises to the mitochondrion inner membrane. Functionally, required for the maintenance of the structure of the mitochondrial inner membrane. Involved in mitochondrial morphology. Causes growth arrest when highly overexpressed. This Neurospora crassa (strain ATCC 24698 / 74-OR23-1A / CBS 708.71 / DSM 1257 / FGSC 987) protein is Sensitive to high expression protein 9 homolog, mitochondrial (she-9).